A 175-amino-acid chain; its full sequence is Crossover junction endodeoxyribonuclease RuvC (175 aa).

Catalysis depends on residues D16, E76, and D148. Residues D16, E76, and D148 each contribute to the Mg(2+) site.

It belongs to the RuvC family. As to quaternary structure, homodimer which binds Holliday junction (HJ) DNA. The HJ becomes 2-fold symmetrical on binding to RuvC with unstacked arms; it has a different conformation from HJ DNA in complex with RuvA. In the full resolvosome a probable DNA-RuvA(4)-RuvB(12)-RuvC(2) complex forms which resolves the HJ. Mg(2+) serves as cofactor.

The protein localises to the cytoplasm. It carries out the reaction Endonucleolytic cleavage at a junction such as a reciprocal single-stranded crossover between two homologous DNA duplexes (Holliday junction).. Functionally, the RuvA-RuvB-RuvC complex processes Holliday junction (HJ) DNA during genetic recombination and DNA repair. Endonuclease that resolves HJ intermediates. Cleaves cruciform DNA by making single-stranded nicks across the HJ at symmetrical positions within the homologous arms, yielding a 5'-phosphate and a 3'-hydroxyl group; requires a central core of homology in the junction. The consensus cleavage sequence is 5'-(A/T)TT(C/G)-3'. Cleavage occurs on the 3'-side of the TT dinucleotide at the point of strand exchange. HJ branch migration catalyzed by RuvA-RuvB allows RuvC to scan DNA until it finds its consensus sequence, where it cleaves and resolves the cruciform DNA. This Rhodopseudomonas palustris (strain BisB18) protein is Crossover junction endodeoxyribonuclease RuvC.